We begin with the raw amino-acid sequence, 425 residues long: Glucose-6-phosphate 1-dehydrogenase (425 aa).

Residues R44 and K135 each coordinate NADP(+). 4 residues coordinate substrate: H165, K169, E201, and D220. H225 (proton acceptor) is an active-site residue. Residue K311 coordinates substrate.

It belongs to the glucose-6-phosphate dehydrogenase family.

It carries out the reaction D-glucose 6-phosphate + NADP(+) = 6-phospho-D-glucono-1,5-lactone + NADPH + H(+). The protein operates within carbohydrate degradation; pentose phosphate pathway; D-ribulose 5-phosphate from D-glucose 6-phosphate (oxidative stage): step 1/3. Catalyzes the oxidation of glucose 6-phosphate to 6-phosphogluconolactone. The chain is Glucose-6-phosphate 1-dehydrogenase from Helicobacter pylori (strain J99 / ATCC 700824) (Campylobacter pylori J99).